The following is a 319-amino-acid chain: Phosphoribosylformylglycinamidine cyclo-ligase (319 aa).

This sequence belongs to the AIR synthase family.

It localises to the cytoplasm. The enzyme catalyses 2-formamido-N(1)-(5-O-phospho-beta-D-ribosyl)acetamidine + ATP = 5-amino-1-(5-phospho-beta-D-ribosyl)imidazole + ADP + phosphate + H(+). Its pathway is purine metabolism; IMP biosynthesis via de novo pathway; 5-amino-1-(5-phospho-D-ribosyl)imidazole from N(2)-formyl-N(1)-(5-phospho-D-ribosyl)glycinamide: step 2/2. This chain is Phosphoribosylformylglycinamidine cyclo-ligase, found in Sulfurisphaera tokodaii (strain DSM 16993 / JCM 10545 / NBRC 100140 / 7) (Sulfolobus tokodaii).